A 238-amino-acid chain; its full sequence is Proteasome subunit beta type-6 (238 aa).

Ala2 is subject to N-acetylalanine. Residues 2 to 33 constitute a propeptide, removed in mature form; that stretch reads AAALAVRRAGSAPAFGPEALTPDWENREVSTG. Thr34 (nucleophile) is an active-site residue. Thr68 is modified (phosphothreonine).

This sequence belongs to the peptidase T1B family. In terms of assembly, the 26S proteasome consists of a 20S proteasome core and two 19S regulatory subunits. The 20S proteasome core is a barrel-shaped complex made of 28 subunits that are arranged in four stacked rings. The two outer rings are each formed by seven alpha subunits, and the two inner rings are formed by seven beta subunits. The proteolytic activity is exerted by three beta-subunits PSMB5, PSMB6 and PSMB7.

The protein localises to the cytoplasm. Its subcellular location is the nucleus. It catalyses the reaction Cleavage of peptide bonds with very broad specificity.. Component of the 20S core proteasome complex involved in the proteolytic degradation of most intracellular proteins. This complex plays numerous essential roles within the cell by associating with different regulatory particles. Associated with two 19S regulatory particles, forms the 26S proteasome and thus participates in the ATP-dependent degradation of ubiquitinated proteins. The 26S proteasome plays a key role in the maintenance of protein homeostasis by removing misfolded or damaged proteins that could impair cellular functions, and by removing proteins whose functions are no longer required. Associated with the PA200 or PA28, the 20S proteasome mediates ubiquitin-independent protein degradation. This type of proteolysis is required in several pathways including spermatogenesis (20S-PA200 complex) or generation of a subset of MHC class I-presented antigenic peptides (20S-PA28 complex). Within the 20S core complex, PSMB6 displays a peptidylglutamyl-hydrolyzing activity also termed postacidic or caspase-like activity, meaning that the peptides bond hydrolysis occurs directly after acidic residues. The protein is Proteasome subunit beta type-6 (Psmb6) of Mus musculus (Mouse).